Here is a 303-residue protein sequence, read N- to C-terminus: Putative deoxyribose-phosphate aldolase (303 aa).

D157 (proton donor/acceptor) is an active-site residue. K220 (schiff-base intermediate with acetaldehyde) is an active-site residue. K256 acts as the Proton donor/acceptor in catalysis.

This sequence belongs to the DeoC/FbaB aldolase family. DeoC type 2 subfamily.

It carries out the reaction 2-deoxy-D-ribose 5-phosphate = D-glyceraldehyde 3-phosphate + acetaldehyde. Its pathway is carbohydrate degradation; 2-deoxy-D-ribose 1-phosphate degradation; D-glyceraldehyde 3-phosphate and acetaldehyde from 2-deoxy-alpha-D-ribose 1-phosphate: step 2/2. Its function is as follows. Catalyzes a reversible aldol reaction between acetaldehyde and D-glyceraldehyde 3-phosphate to generate 2-deoxy-D-ribose 5-phosphate. The sequence is that of Putative deoxyribose-phosphate aldolase from Caenorhabditis elegans.